A 646-amino-acid polypeptide reads, in one-letter code: Threonine--tRNA ligase (646 aa).

One can recognise a TGS domain in the interval 1–61 (MIKITFPDGS…NEDANFVLYK (61 aa)). A catalytic region spans residues 242 to 541 (DHRKIGKEMD…LIEHTAGKFP (300 aa)). Zn(2+)-binding residues include Cys-337, His-388, and His-518.

It belongs to the class-II aminoacyl-tRNA synthetase family. Homodimer. Zn(2+) serves as cofactor.

The protein resides in the cytoplasm. It carries out the reaction tRNA(Thr) + L-threonine + ATP = L-threonyl-tRNA(Thr) + AMP + diphosphate + H(+). Functionally, catalyzes the attachment of threonine to tRNA(Thr) in a two-step reaction: L-threonine is first activated by ATP to form Thr-AMP and then transferred to the acceptor end of tRNA(Thr). Also edits incorrectly charged L-seryl-tRNA(Thr). The sequence is that of Threonine--tRNA ligase from Phocaeicola vulgatus (strain ATCC 8482 / DSM 1447 / JCM 5826 / CCUG 4940 / NBRC 14291 / NCTC 11154) (Bacteroides vulgatus).